A 458-amino-acid chain; its full sequence is Elongation factor 1-alpha (458 aa).

The residue at position 2 (G2) is a N,N,N-trimethylglycine; by EFM7. K3 carries the N6,N6-dimethyllysine; by EFM7; alternate modification. K3 carries the post-translational modification N6-methyllysine; by EFM7; alternate. In terms of domain architecture, tr-type G spans 5-240 (KSHINVVVIG…DAIEQPSRPT (236 aa)). The G1 stretch occupies residues 14–21 (GHVDSGKS). At S18 the chain carries Phosphoserine. GTP-binding residues include S21 and T22. Residue K30 is modified to N6-methyllysine; by EFM1. A G2 region spans residues 70–74 (GITID). Phosphothreonine is present on T72. K79 is modified (N6,N6,N6-trimethyllysine; by EFM5). At T82 the chain carries Phosphothreonine. Positions 91–94 (DAPG) are G3. GTP contacts are provided by N153, K154, and D156. The tract at residues 153–156 (NKMD) is G4. A Phosphoserine modification is found at S163. GTP is bound by residues S192, G193, and W194. Residues 192 to 194 (SGW) are G5. Residues K224, K242, and K253 each participate in a glycyl lysine isopeptide (Lys-Gly) (interchain with G-Cter in ubiquitin) cross-link. T259 is modified (phosphothreonine). Residue K271 forms a Glycyl lysine isopeptide (Lys-Gly) (interchain with G-Cter in ubiquitin) linkage. Position 289 is a phosphoserine (S289). N6,N6-dimethyllysine; by EFM4; alternate is present on K316. At K316 the chain carries N6-methyllysine; by EFM4; alternate. The residue at position 390 (K390) is an N6-methyllysine; by EFM6. K393 participates in a covalent cross-link: Glycyl lysine isopeptide (Lys-Gly) (interchain with G-Cter in ubiquitin). Position 414 is a phosphoserine (S414). Phosphothreonine is present on T430. Residue K437 forms a Glycyl lysine isopeptide (Lys-Gly) (interchain with G-Cter in ubiquitin) linkage. K458 carries the lysine methyl ester modification.

The protein belongs to the TRAFAC class translation factor GTPase superfamily. Classic translation factor GTPase family. EF-Tu/EF-1A subfamily. In terms of assembly, the eukaryotic elongation factor 1 complex (eEF1) is probably a heterohexamer. Two trimeric complexes, each composed of eEF1A (TEF1 or TEF2), eEF1Balpha (EFB1) and eEF1Bgamma (CAM1 or TEF4), are probably dimerized via the eF1Bgamma subunits. Interacts with eEF1Balpha; the interaction is direct. Interacts with GCN2 (via C-terminus); this interaction is direct, occurs in amino acid-repleted cells, may be stabilized in a ribosome-dependent manner, reduces GCN2-mediated eIF-2-alpha phosphorylation and is lost in amino acid-starved cells and by uncharged tRNAs. Interacts with CEX1. Interacts with elongation factor 3 (YEF3 or HEF3). Interacts with NAP1. Interacts with SRV2. Interacts with chaperone ZPR1; the interaction is required for its proper folding. Binds to actin and forms a ternary complex with BNI1 and profilin. Interacts with the proteasome, probably via RPT1. Associates with ribosomes. In terms of processing, S-thiolated in response to oxidative stress, probably inhibiting the protein and causing a reduction in protein synthesis. Glutaminylated at Glu-45. An L-glutamine is linked to Glu-45 via the alpha amino group. This glutaminylation is yeast-specific and not essential for the normal functions of eEF1A. However, eEF1A glutaminylation slightly reduced growth under antibiotic-induced translational stress conditions.

It localises to the cytoplasm. Its subcellular location is the cytoskeleton. It functions in the pathway protein biosynthesis; polypeptide chain elongation. Inhibited by narciclasine. Functionally, GTP-binding component of the eukaryotic elongation factor 1 complex (eEF1). In its active GTP-bound form, binds to and delivers aminoacyl-tRNA to the A-site of ribosomes during protein biosynthesis. In the presence of a correct codon-anticodon match between the aminoacyl-tRNA and the A-site codon of the ribosome-bound mRNA, the ribosome acts as a GTPase activator and the GTP is hydrolyzed. The inactive GDP-bound form leaves the ribosome and must be recycled by its guanine nucleotide exchange factor (GEF) (eEF1B subcomplex) before binding another molecule of aminoacyl-tRNA. Required for nuclear export of aminoacyl-tRNAs. May also be involved in translational quality control by targeting cotranslationally damaged proteins to the proteasome. Also exhibits actin filament-binding and -bundling activities and is involved in cytoskeleton organization. Plays a role as a negative regulator of GCN2 kinase activity by inhibiting GCN2-mediated eIF-2-alpha phosphorylation in amino acid-repleted cells. The polypeptide is Elongation factor 1-alpha (TEF1) (Saccharomyces cerevisiae (strain ATCC 204508 / S288c) (Baker's yeast)).